A 483-amino-acid polypeptide reads, in one-letter code: Isocitrate dehydrogenase [NADP] (483 aa).

Thr74 lines the NADP(+) pocket. Positions 83, 85, 89, 99, and 121 each coordinate D-threo-isocitrate. Asp232 contacts Mg(2+). Residues 264–270 and Asn277 contribute to the NADP(+) site; that span reads HGSAPDI.

Belongs to the isocitrate and isopropylmalate dehydrogenases family. Homodimer. The cofactor is Mg(2+). Requires Mn(2+) as cofactor.

The enzyme catalyses D-threo-isocitrate + NADP(+) = 2-oxoglutarate + CO2 + NADPH. Functionally, catalyzes the oxidative decarboxylation of isocitrate to 2-oxoglutarate and carbon dioxide with the concomitant reduction of NADP(+). This Rickettsia prowazekii (strain Madrid E) protein is Isocitrate dehydrogenase [NADP] (icd).